The chain runs to 123 residues: Small ribosomal subunit protein uS12 (123 aa).

Aspartate 89 carries the 3-methylthioaspartic acid modification.

This sequence belongs to the universal ribosomal protein uS12 family. In terms of assembly, part of the 30S ribosomal subunit. Contacts proteins S8 and S17. May interact with IF1 in the 30S initiation complex.

In terms of biological role, with S4 and S5 plays an important role in translational accuracy. Its function is as follows. Interacts with and stabilizes bases of the 16S rRNA that are involved in tRNA selection in the A site and with the mRNA backbone. Located at the interface of the 30S and 50S subunits, it traverses the body of the 30S subunit contacting proteins on the other side and probably holding the rRNA structure together. The combined cluster of proteins S8, S12 and S17 appears to hold together the shoulder and platform of the 30S subunit. This is Small ribosomal subunit protein uS12 from Mesorhizobium japonicum (strain LMG 29417 / CECT 9101 / MAFF 303099) (Mesorhizobium loti (strain MAFF 303099)).